A 263-amino-acid polypeptide reads, in one-letter code: Tryptophan 2,3-dioxygenase (263 aa).

Substrate-binding positions include 32–36, tyrosine 94, and arginine 98; that span reads FIVIH. Histidine 221 contributes to the heme binding site. Residue threonine 235 coordinates substrate.

This sequence belongs to the tryptophan 2,3-dioxygenase family. In terms of assembly, homotetramer. Requires heme as cofactor.

It catalyses the reaction L-tryptophan + O2 = N-formyl-L-kynurenine. It participates in amino-acid degradation; L-tryptophan degradation via kynurenine pathway; L-kynurenine from L-tryptophan: step 1/2. Its function is as follows. Heme-dependent dioxygenase that catalyzes the oxidative cleavage of the L-tryptophan (L-Trp) pyrrole ring and converts L-tryptophan to N-formyl-L-kynurenine. Catalyzes the oxidative cleavage of the indole moiety. The polypeptide is Tryptophan 2,3-dioxygenase (Caulobacter vibrioides (strain ATCC 19089 / CIP 103742 / CB 15) (Caulobacter crescentus)).